We begin with the raw amino-acid sequence, 900 residues long: Alanine--tRNA ligase (900 aa).

Zn(2+)-binding residues include H587, H591, C691, and H695.

The protein belongs to the class-II aminoacyl-tRNA synthetase family. Zn(2+) serves as cofactor.

Its subcellular location is the cytoplasm. The enzyme catalyses tRNA(Ala) + L-alanine + ATP = L-alanyl-tRNA(Ala) + AMP + diphosphate. Its function is as follows. Catalyzes the attachment of alanine to tRNA(Ala) in a two-step reaction: alanine is first activated by ATP to form Ala-AMP and then transferred to the acceptor end of tRNA(Ala). Also edits incorrectly charged Ser-tRNA(Ala) and Gly-tRNA(Ala) via its editing domain. The protein is Alanine--tRNA ligase of Aeropyrum pernix (strain ATCC 700893 / DSM 11879 / JCM 9820 / NBRC 100138 / K1).